The following is a 379-amino-acid chain: MRPTRAEVNLAHLRHNLRVLERGLTGATKPQIWGVLKADAYGHGAPAVARTLERAGIPGLCVALLEEAIELRDAGIRLPILVMGGYYGPRRDGFEEIIARDLVPVVYDAGQIERLASVVRLEQRGRVGVHLKVDTGMGRLGAASSEIEAVLATLAKHPEVKLDGLMTHLACADADDLGVTIEQMRLFGEIEQRAKSFGLTPRVRHASNSAAMLRLPAALLDIVRPGVALFGISPCAGLAPDLKPVIRVRSEIVALRTIAKGDRIGYGHTWQASRESVVATVPMGYADGLSRQLSNRGAALVRGQRAPIAGAVSMDLTMLDVTDVPGARLGDEVVFLGTQDGPLGRGTISAEEIAGLTGTIAWEVLTSISRRVPRFYREP.

The active-site Proton acceptor; specific for D-alanine is Lys37. The residue at position 37 (Lys37) is an N6-(pyridoxal phosphate)lysine. A substrate-binding site is contributed by Arg139. Tyr266 acts as the Proton acceptor; specific for L-alanine in catalysis. Met314 provides a ligand contact to substrate.

The protein belongs to the alanine racemase family. Requires pyridoxal 5'-phosphate as cofactor.

The catalysed reaction is L-alanine = D-alanine. It participates in amino-acid biosynthesis; D-alanine biosynthesis; D-alanine from L-alanine: step 1/1. In terms of biological role, catalyzes the interconversion of L-alanine and D-alanine. May also act on other amino acids. The polypeptide is Alanine racemase (alr) (Sorangium cellulosum (strain So ce56) (Polyangium cellulosum (strain So ce56))).